The following is a 968-amino-acid chain: Leucine--tRNA ligase (968 aa).

Residues 1–13 are compositionally biased toward polar residues; sequence MTETPTGTQSSRE. A disordered region spans residues 1 to 22; the sequence is MTETPTGTQSSRETAADDTPRH. Residues 75 to 86 carry the 'HIGH' region motif; the sequence is PYPSGEGLHVGH. Residues 741–745 carry the 'KMSKS' region motif; it reads KIGKS. Residue Lys744 coordinates ATP.

This sequence belongs to the class-I aminoacyl-tRNA synthetase family.

The protein resides in the cytoplasm. It carries out the reaction tRNA(Leu) + L-leucine + ATP = L-leucyl-tRNA(Leu) + AMP + diphosphate. This chain is Leucine--tRNA ligase, found in Mycolicibacterium vanbaalenii (strain DSM 7251 / JCM 13017 / BCRC 16820 / KCTC 9966 / NRRL B-24157 / PYR-1) (Mycobacterium vanbaalenii).